The following is a 77-amino-acid chain: Putative defensin-like protein 185 (77 aa).

An N-terminal signal peptide occupies residues 1–22 (MKNSSILLLLVVFFVISSSGEA). Cystine bridges form between Cys-25–Cys-77, Cys-31–Cys-54, Cys-40–Cys-71, and Cys-44–Cys-73.

The protein belongs to the DEFL family.

The protein localises to the secreted. This is Putative defensin-like protein 185 (LCR39) from Arabidopsis thaliana (Mouse-ear cress).